We begin with the raw amino-acid sequence, 361 residues long: MVPQSDDFERIVLKNIPLIDVRAPVEFAQGAFEMAHNLPLMNDEERQTVGICYKQKGHDEAVKLGHRLVNDKVRLPRVSGWQSFMEKYPEAMLYCFRGGMRSKIAQQWLADNGCEIVRLKGGYKAFRRYLIDHLEIMPQRFSTEGIQTWALGGRTGCGKTRLLHTLDNAIDLEGLANHRGSAFGGHVAPQPTQINFENTLAMAVMRFYAQGHSSLVLEDESHCIGSVSVPKTFFDFFKGGRQVLLEAPLEERVSITREEYVEQAQAEYETTEDWTVFMRSAFGRIRKRLGGERYQRVLKKFDQACENQHRTQEFDAHDDWIRILLTEYYDPMYDYQMQKKQCKIDFSGNFDAVKDFLSQQS.

The Rhodanese domain maps to 12–135 (VLKNIPLIDV…FRRYLIDHLE (124 aa)). Residue C95 is the S-selanylcysteine intermediate of the active site.

This sequence belongs to the SelU family. As to quaternary structure, monomer.

The enzyme catalyses 5-methylaminomethyl-2-thiouridine(34) in tRNA + selenophosphate + (2E)-geranyl diphosphate + H2O + H(+) = 5-methylaminomethyl-2-selenouridine(34) in tRNA + (2E)-thiogeraniol + phosphate + diphosphate. It carries out the reaction 5-methylaminomethyl-2-thiouridine(34) in tRNA + (2E)-geranyl diphosphate = 5-methylaminomethyl-S-(2E)-geranyl-thiouridine(34) in tRNA + diphosphate. It catalyses the reaction 5-methylaminomethyl-S-(2E)-geranyl-thiouridine(34) in tRNA + selenophosphate + H(+) = 5-methylaminomethyl-2-(Se-phospho)selenouridine(34) in tRNA + (2E)-thiogeraniol. The catalysed reaction is 5-methylaminomethyl-2-(Se-phospho)selenouridine(34) in tRNA + H2O = 5-methylaminomethyl-2-selenouridine(34) in tRNA + phosphate. Involved in the post-transcriptional modification of the uridine at the wobble position (U34) of tRNA(Lys), tRNA(Glu) and tRNA(Gln). Catalyzes the conversion of 2-thiouridine (S2U-RNA) to 2-selenouridine (Se2U-RNA). Acts in a two-step process involving geranylation of 2-thiouridine (S2U) to S-geranyl-2-thiouridine (geS2U) and subsequent selenation of the latter derivative to 2-selenouridine (Se2U) in the tRNA chain. The sequence is that of tRNA 2-selenouridine synthase from Hydrogenovibrio crunogenus (strain DSM 25203 / XCL-2) (Thiomicrospira crunogena).